The sequence spans 379 residues: Chaperone protein DnaJ (379 aa).

The 66-residue stretch at 5-70 (DYYEVLGVSR…QKRAAYDQYG (66 aa)) folds into the J domain. The CR-type zinc-finger motif lies at 134–212 (GVTKEIRIPT…CHGHGRVEKS (79 aa)). Residues C147, C150, C164, C167, C186, C189, C200, and C203 each contribute to the Zn(2+) site. CXXCXGXG motif repeat units lie at residues 147–154 (CDVCHGSG), 164–171 (CPTCHGAG), 186–193 (CPHCHGRG), and 200–207 (CNKCHGHG).

It belongs to the DnaJ family. As to quaternary structure, homodimer. It depends on Zn(2+) as a cofactor.

The protein resides in the cytoplasm. Its function is as follows. Participates actively in the response to hyperosmotic and heat shock by preventing the aggregation of stress-denatured proteins and by disaggregating proteins, also in an autonomous, DnaK-independent fashion. Unfolded proteins bind initially to DnaJ; upon interaction with the DnaJ-bound protein, DnaK hydrolyzes its bound ATP, resulting in the formation of a stable complex. GrpE releases ADP from DnaK; ATP binding to DnaK triggers the release of the substrate protein, thus completing the reaction cycle. Several rounds of ATP-dependent interactions between DnaJ, DnaK and GrpE are required for fully efficient folding. Also involved, together with DnaK and GrpE, in the DNA replication of plasmids through activation of initiation proteins. In Yersinia pestis bv. Antiqua (strain Antiqua), this protein is Chaperone protein DnaJ.